Consider the following 637-residue polypeptide: 3D-(3,5/4)-trihydroxycyclohexane-1,2-dione hydrolase (637 aa).

Glu-66 serves as a coordination point for thiamine diphosphate. The tract at residues 442–522 (SLPGDLQRLW…INILLFDNAG (81 aa)) is thiamine pyrophosphate binding. 2 residues coordinate Mg(2+): Asp-493 and Asn-520.

It belongs to the TPP enzyme family. Requires Mg(2+) as cofactor. It depends on thiamine diphosphate as a cofactor.

It catalyses the reaction 3D-3,5/4-trihydroxycyclohexane-1,2-dione + H2O = 5-deoxy-D-glucuronate + H(+). It participates in polyol metabolism; myo-inositol degradation into acetyl-CoA; acetyl-CoA from myo-inositol: step 3/7. In terms of biological role, involved in the cleavage of the C1-C2 bond of 3D-(3,5/4)-trihydroxycyclohexane-1,2-dione (THcHDO) to yield 5-deoxy-glucuronate (5DG). The chain is 3D-(3,5/4)-trihydroxycyclohexane-1,2-dione hydrolase from Shouchella clausii (strain KSM-K16) (Alkalihalobacillus clausii).